A 122-amino-acid chain; its full sequence is Large ribosomal subunit protein uL14 (122 aa).

Belongs to the universal ribosomal protein uL14 family. As to quaternary structure, part of the 50S ribosomal subunit. Forms a cluster with proteins L3 and L19. In the 70S ribosome, L14 and L19 interact and together make contacts with the 16S rRNA in bridges B5 and B8.

Its function is as follows. Binds to 23S rRNA. Forms part of two intersubunit bridges in the 70S ribosome. The protein is Large ribosomal subunit protein uL14 of Rhizobium johnstonii (strain DSM 114642 / LMG 32736 / 3841) (Rhizobium leguminosarum bv. viciae).